Reading from the N-terminus, the 115-residue chain is Large ribosomal subunit protein bL20c (115 aa).

Belongs to the bacterial ribosomal protein bL20 family.

It is found in the plastid. Its subcellular location is the chloroplast. Functionally, binds directly to 23S ribosomal RNA and is necessary for the in vitro assembly process of the 50S ribosomal subunit. It is not involved in the protein synthesizing functions of that subunit. The sequence is that of Large ribosomal subunit protein bL20c (rpl20) from Chlorella vulgaris (Green alga).